Consider the following 132-residue polypeptide: Transcription antitermination protein NusB (132 aa).

This sequence belongs to the NusB family.

Its function is as follows. Involved in transcription antitermination. Required for transcription of ribosomal RNA (rRNA) genes. Binds specifically to the boxA antiterminator sequence of the ribosomal RNA (rrn) operons. This Campylobacter jejuni subsp. jejuni serotype O:2 (strain ATCC 700819 / NCTC 11168) protein is Transcription antitermination protein NusB.